A 453-amino-acid polypeptide reads, in one-letter code: MKFFALAALFASTVNSIAVDGLIPGARVIPANDVVALKKAGAYHQKHHHRRTVIIRSSSSDEDDVSADFLWGIKRANHGGRLLLQNGKKYVIGKKLDLTFLKDIEVQLDGELKFTNDVPYWQANNFYYDFQKSISFWRWGGEDIKIFGSGVLNGNGQRWYNEFAGQEILDPNNKYYRPILFVTENATRVSVEGITQLNSPCWTNFFVRTKDISFDNVFIHAYSTNASALPKNTDGFDTLNVDGLTVTNTRVDIGDDCLSPKPNTTNVFVKNLWCNGTHGASMGSIGQYPGVLDIIENVWIENVTLLNGENGARLKAWAGPDVGYGRINNVTYKNIHVENTDNPIVLDQCYFNINATQCAAYPSRVNFTNIVFEDIYGTSSGKRGKVVADLTCSPNAVCSGIRLKNIHLTSPAGSPPVIVCDGIQGDIGVECQSSSNSTTKRSVDLARSLKYRA.

A signal peptide spans 1–16 (MKFFALAALFASTVNS). N185 and N225 each carry an N-linked (GlcNAc...) asparagine glycan. Residue D255 is the Proton donor of the active site. C257 and C274 are oxidised to a cystine. 2 N-linked (GlcNAc...) asparagine glycosylation sites follow: N263 and N275. Residue H278 is part of the active site. 2 PbH1 repeats span residues 295–316 (IENV…RLKA) and 327–348 (INNV…VLDQ). Residues N302, N329, N354, and N366 are each glycosylated (N-linked (GlcNAc...) asparagine). The stretch at 362-405 (PSRVNFTNIVFEDIYGTSSGKRGKVVADLTCSPNAVCSGIRLKN) is one PbH1 3 repeat. C392 and C398 are disulfide-bonded. An N-linked (GlcNAc...) asparagine glycan is attached at N436.

The protein belongs to the glycosyl hydrolase 28 family.

The protein localises to the secreted. It carries out the reaction [(1-&gt;4)-alpha-D-galacturonosyl](n) + H2O = alpha-D-galacturonate + [(1-&gt;4)-alpha-D-galacturonosyl](n-1). Functionally, specific in hydrolyzing the terminal glycosidic bond of polygalacturonic acid and oligogalacturonates. This chain is Probable exopolygalacturonase B (pgxB), found in Aspergillus fumigatus (strain CBS 144.89 / FGSC A1163 / CEA10) (Neosartorya fumigata).